A 459-amino-acid chain; its full sequence is Putative peroxisome assembly protein 12 (459 aa).

The Peroxisomal matrix portion of the chain corresponds to 1 to 16 (MFMFNFDNGHDPNRPS). A helical membrane pass occupies residues 17-44 (FFEMLNQHQMMPSFKPALKYIFTVLSQR). The Cytoplasmic portion of the chain corresponds to 45–47 (NPK). A helical membrane pass occupies residues 48-72 (FRYIVNYYDECFYSLLLLLEYHYLK). Residues 73 to 158 (YYEGSFSENF…AKDDLNTMIQ (86 aa)) lie on the Peroxisomal matrix side of the membrane. The chain crosses the membrane as a helical span at residues 159–196 (DSDRKESLIYLVLIPYFKGKLDEYYKKESDPLAELGLV). Residues 197–248 (SSDNNNNNNDNINDQIQQLEEQIQQQQTIVNGNNNSNNNNKKLKIKFLILIR) are Cytoplasmic-facing. A helical transmembrane segment spans residues 249–287 (FLKGSKTLKKLKTIFLKVYPFISAIYEALFFIYQLLYLY). At 288-355 (EYTNYYTPFF…LDSILDYSKY (68 aa)) the chain is on the peroxisomal matrix side. Residues 356–380 (ILPLSVFIFKSLEWWYSENRISAPT) traverse the membrane as a helical segment. Topologically, residues 381 to 459 (LPIPTPPTPS…EQLRKIYETV (79 aa)) are cytoplasmic. The Zn(2+) site is built by Cys-406, Cys-409, Cys-426, and Cys-429. The RING-type; degenerate zinc-finger motif lies at 406–444 (CPLCLKERTNPTICGSGFVFCYPCIFGYVNEHSKCPITF).

The protein belongs to the pex2/pex10/pex12 family. As to quaternary structure, component of the PEX2-PEX10-PEX12 retrotranslocation channel.

The protein localises to the peroxisome membrane. Its pathway is protein modification; protein ubiquitination. Functionally, component of a retrotranslocation channel required for peroxisome organization by mediating export of the PEX5 receptor from peroxisomes to the cytosol, thereby promoting PEX5 recycling. The retrotranslocation channel is composed of PEX2, PEX10 and PEX12; each subunit contributing transmembrane segments that coassemble into an open channel that specifically allows the passage of PEX5 through the peroxisomal membrane. PEX12 also regulates PEX5 recycling by activating the E3 ubiquitin-protein ligase activity of PEX10. When PEX5 recycling is compromised, PEX12 stimulates PEX10-mediated polyubiquitination of PEX5, leading to its subsequent degradation. This is Putative peroxisome assembly protein 12 (pex12) from Dictyostelium discoideum (Social amoeba).